Reading from the N-terminus, the 130-residue chain is DNA-directed RNA polymerase subunit omega (130 aa).

The disordered stretch occupies residues 109 to 130; that stretch reads EEELLKGLEGLAPPEEQPEEDE.

The protein belongs to the RNA polymerase subunit omega family. The RNAP catalytic core consists of 2 alpha, 1 beta, 1 beta' and 1 omega subunit. When a sigma factor is associated with the core the holoenzyme is formed, which can initiate transcription.

The catalysed reaction is RNA(n) + a ribonucleoside 5'-triphosphate = RNA(n+1) + diphosphate. Its function is as follows. Promotes RNA polymerase assembly. Latches the N- and C-terminal regions of the beta' subunit thereby facilitating its interaction with the beta and alpha subunits. This Rhodopseudomonas palustris (strain BisA53) protein is DNA-directed RNA polymerase subunit omega.